The primary structure comprises 282 residues: NADPH-dependent 7-cyano-7-deazaguanine reductase (282 aa).

Isoleucine 88–serine 90 lines the substrate pocket. Serine 90–lysine 91 contacts NADPH. Cysteine 190 (thioimide intermediate) is an active-site residue. Aspartate 197 serves as the catalytic Proton donor. Position 229–230 (histidine 229–glutamate 230) interacts with substrate. Arginine 258 to glycine 259 is a binding site for NADPH.

This sequence belongs to the GTP cyclohydrolase I family. QueF type 2 subfamily. Homodimer.

The protein localises to the cytoplasm. It carries out the reaction 7-aminomethyl-7-carbaguanine + 2 NADP(+) = 7-cyano-7-deazaguanine + 2 NADPH + 3 H(+). Its pathway is tRNA modification; tRNA-queuosine biosynthesis. In terms of biological role, catalyzes the NADPH-dependent reduction of 7-cyano-7-deazaguanine (preQ0) to 7-aminomethyl-7-deazaguanine (preQ1). In Salmonella paratyphi A (strain ATCC 9150 / SARB42), this protein is NADPH-dependent 7-cyano-7-deazaguanine reductase.